Here is a 143-residue protein sequence, read N- to C-terminus: Putative pre-16S rRNA nuclease (143 aa).

It belongs to the YqgF nuclease family.

The protein localises to the cytoplasm. Its function is as follows. Could be a nuclease involved in processing of the 5'-end of pre-16S rRNA. The polypeptide is Putative pre-16S rRNA nuclease (Leuconostoc citreum (strain KM20)).